Consider the following 348-residue polypeptide: D-alanine--D-alanine ligase (348 aa).

The ATP-grasp domain maps to 132–334 (KRILEVAGVP…YSDIIKELVV (203 aa)). Residue 162–217 (LEKLTFPVFVKPANMGSSVGISKAENESELRSAIDLALKYDSRILIEQGVVAREIE) coordinates ATP. Positions 288, 301, and 303 each coordinate Mg(2+).

The protein belongs to the D-alanine--D-alanine ligase family. The cofactor is Mg(2+). Mn(2+) serves as cofactor.

It localises to the cytoplasm. It catalyses the reaction 2 D-alanine + ATP = D-alanyl-D-alanine + ADP + phosphate + H(+). It functions in the pathway cell wall biogenesis; peptidoglycan biosynthesis. In terms of biological role, cell wall formation. The sequence is that of D-alanine--D-alanine ligase from Streptococcus thermophilus (strain CNRZ 1066).